Here is a 198-residue protein sequence, read N- to C-terminus: Imidazole glycerol phosphate synthase subunit HisH (198 aa).

One can recognise a Glutamine amidotransferase type-1 domain in the interval 1–194 (MIAIIDYGLG…LKGGFQDDQT (194 aa)). The Nucleophile role is filled by cysteine 77. Catalysis depends on residues histidine 169 and glutamate 171.

Heterodimer of HisH and HisF.

Its subcellular location is the cytoplasm. It catalyses the reaction 5-[(5-phospho-1-deoxy-D-ribulos-1-ylimino)methylamino]-1-(5-phospho-beta-D-ribosyl)imidazole-4-carboxamide + L-glutamine = D-erythro-1-(imidazol-4-yl)glycerol 3-phosphate + 5-amino-1-(5-phospho-beta-D-ribosyl)imidazole-4-carboxamide + L-glutamate + H(+). The catalysed reaction is L-glutamine + H2O = L-glutamate + NH4(+). It functions in the pathway amino-acid biosynthesis; L-histidine biosynthesis; L-histidine from 5-phospho-alpha-D-ribose 1-diphosphate: step 5/9. In terms of biological role, IGPS catalyzes the conversion of PRFAR and glutamine to IGP, AICAR and glutamate. The HisH subunit catalyzes the hydrolysis of glutamine to glutamate and ammonia as part of the synthesis of IGP and AICAR. The resulting ammonia molecule is channeled to the active site of HisF. This chain is Imidazole glycerol phosphate synthase subunit HisH, found in Staphylococcus saprophyticus subsp. saprophyticus (strain ATCC 15305 / DSM 20229 / NCIMB 8711 / NCTC 7292 / S-41).